Consider the following 414-residue polypeptide: Probable protein phosphatase 2C 9 (414 aa).

Residues 15-37 traverse the membrane as a helical segment; sequence TATAAVAAAVSASAAAAVSSAID. A disordered region spans residues 56–95; that stretch reads LQAGEDGRPGKRQRLARTASGAPRPDEDSASERPSCGRTE. The region spanning 99 to 410 is the PPM-type phosphatase domain; that stretch reads RYGVTAVCGR…DNVSVVVVDL (312 aa). Residues Asp-136 and Gly-137 each contribute to the Mn(2+) site. Positions 186-195 are enriched in basic and acidic residues; it reads GNRASTRSDD. The disordered stretch occupies residues 186–212; the sequence is GNRASTRSDDEPACPCEQQTPSRRDHA. Residue Asp-319 coordinates Mn(2+). A disordered region spans residues 345–372; that stretch reads APAARPSGVPSSAEAAETENGGAASVKG. Positions 355–369 are enriched in low complexity; it reads SSAEAAETENGGAAS. Asp-401 provides a ligand contact to Mn(2+).

It belongs to the PP2C family. The cofactor is Mg(2+). It depends on Mn(2+) as a cofactor.

The protein localises to the membrane. The enzyme catalyses O-phospho-L-seryl-[protein] + H2O = L-seryl-[protein] + phosphate. It catalyses the reaction O-phospho-L-threonyl-[protein] + H2O = L-threonyl-[protein] + phosphate. In Oryza sativa subsp. japonica (Rice), this protein is Probable protein phosphatase 2C 9.